The sequence spans 76 residues: Exodeoxyribonuclease 7 small subunit (76 aa).

Belongs to the XseB family. In terms of assembly, heterooligomer composed of large and small subunits.

The protein localises to the cytoplasm. It carries out the reaction Exonucleolytic cleavage in either 5'- to 3'- or 3'- to 5'-direction to yield nucleoside 5'-phosphates.. Functionally, bidirectionally degrades single-stranded DNA into large acid-insoluble oligonucleotides, which are then degraded further into small acid-soluble oligonucleotides. The polypeptide is Exodeoxyribonuclease 7 small subunit (Geotalea uraniireducens (strain Rf4) (Geobacter uraniireducens)).